Consider the following 40-residue polypeptide: Dolichyl-diphosphooligosaccharide--protein glycosyltransferase subunit 4 (40 aa).

The Lumenal segment spans residues 1 to 4; sequence MITD. A helical transmembrane segment spans residues 5–25; sequence VQLAIFSNVLGVFLFLLVVAY. Over 26–40 the chain is Cytoplasmic; it reads HYINANTGKSIIKSK.

Belongs to the OST4 family. As to quaternary structure, component of the oligosaccharyltransferase (OST) complex.

Its subcellular location is the endoplasmic reticulum membrane. Its function is as follows. Subunit of the oligosaccharyl transferase (OST) complex that catalyzes the initial transfer of a defined glycan (Glc(3)Man(9)GlcNAc(2) in eukaryotes) from the lipid carrier dolichol-pyrophosphate to an asparagine residue within an Asn-X-Ser/Thr consensus motif in nascent polypeptide chains, the first step in protein N-glycosylation. N-glycosylation occurs cotranslationally and the complex associates with the Sec61 complex at the channel-forming translocon complex that mediates protein translocation across the endoplasmic reticulum (ER). All subunits are required for a maximal enzyme activity. The sequence is that of Dolichyl-diphosphooligosaccharide--protein glycosyltransferase subunit 4 from Drosophila grimshawi (Hawaiian fruit fly).